The following is a 415-amino-acid chain: Gamma-glutamyl phosphate reductase (415 aa).

This sequence belongs to the gamma-glutamyl phosphate reductase family.

It localises to the cytoplasm. The enzyme catalyses L-glutamate 5-semialdehyde + phosphate + NADP(+) = L-glutamyl 5-phosphate + NADPH + H(+). It functions in the pathway amino-acid biosynthesis; L-proline biosynthesis; L-glutamate 5-semialdehyde from L-glutamate: step 2/2. Catalyzes the NADPH-dependent reduction of L-glutamate 5-phosphate into L-glutamate 5-semialdehyde and phosphate. The product spontaneously undergoes cyclization to form 1-pyrroline-5-carboxylate. The protein is Gamma-glutamyl phosphate reductase of Leuconostoc citreum (strain KM20).